Reading from the N-terminus, the 238-residue chain is uncharacterized protein (238 aa).

The next 4 helical transmembrane spans lie at 13 to 33 (TLFF…FGII), 40 to 60 (GSVG…LILG), 107 to 127 (VVLI…FCQV), and 140 to 160 (VISL…PMAF). 2 consecutive 4Fe-4S ferredoxin-type domains span residues 178–208 (PFFQ…TEKL) and 204–233 (ITEK…FSYA). 8 residues coordinate [4Fe-4S] cluster: Cys188, Cys191, Cys194, Cys198, Cys213, Cys216, Cys219, and Cys223.

It localises to the cell membrane. This is an uncharacterized protein from Methanocaldococcus jannaschii (strain ATCC 43067 / DSM 2661 / JAL-1 / JCM 10045 / NBRC 100440) (Methanococcus jannaschii).